Reading from the N-terminus, the 761-residue chain is Mitochondrial intermediate peptidase 1 (761 aa).

Histidine 530 contributes to the Zn(2+) binding site. Glutamate 531 is an active-site residue. Residues histidine 534 and histidine 537 each contribute to the Zn(2+) site.

It belongs to the peptidase M3 family. Requires Zn(2+) as cofactor.

The protein localises to the mitochondrion matrix. The catalysed reaction is Release of an N-terminal octapeptide as second stage of processing of some proteins imported into the mitochondrion.. Functionally, cleaves proteins, imported into the mitochondrion, to their mature size. While most mitochondrial precursor proteins are processed to the mature form in one step by mitochondrial processing peptidase (MPP), the sequential cleavage by MIP of an octapeptide after initial processing by MPP is a required step for a subgroup of nuclear-encoded precursor proteins destined for the matrix or the inner membrane. This chain is Mitochondrial intermediate peptidase 1 (OCT1), found in Cryptococcus neoformans var. neoformans serotype D (strain B-3501A) (Filobasidiella neoformans).